Reading from the N-terminus, the 66-residue chain is Large ribosomal subunit protein uL29 (66 aa).

This sequence belongs to the universal ribosomal protein uL29 family.

This Rhizobium johnstonii (strain DSM 114642 / LMG 32736 / 3841) (Rhizobium leguminosarum bv. viciae) protein is Large ribosomal subunit protein uL29.